A 327-amino-acid polypeptide reads, in one-letter code: MAPAGQTTYQKDERVLCFHHEILYEAKILDLRHTDPDDRKSPYEYLVHYKGWKNTWDDWVPQDRLRKFTEENRELATTLRREAEAALRQKSTKTSLKKKGGSDHSSARGSEERQTSVPGRGTKRARDNDIEKEEHFYTRPSVRIVMPDNLKSLLVDDWENVTKNQQVVALPAKSSVNQILDDYLKEERPKRTGSSEVDVLEEVVMGIRDYFDKSLDKILLYRFEREQYRVLRKRWESETADKGPLDVYGAEHLTRLFATMPELIAQTNMDLQSTNRLREELSKFTIWLSKNSNHYFATRYVTASNEYIEKSRGVPNPAPGTATSRLV.

Residues 13–66 (ERVLCFHHEILYEAKILDLRHTDPDDRKSPYEYLVHYKGWKNTWDDWVPQDRLR) enclose the Tudor-knot domain. The disordered stretch occupies residues 85–132 (AALRQKSTKTSLKKKGGSDHSSARGSEERQTSVPGRGTKRARDNDIEK). A compositionally biased stretch (basic and acidic residues) spans 100-114 (GGSDHSSARGSEERQ). Positions 138 to 312 (TRPSVRIVMP…ASNEYIEKSR (175 aa)) constitute an MRG domain.

This sequence belongs to the MRG family. Component of the NuA4 histone acetyltransferase complex.

The protein resides in the nucleus. Involved in deacetylation of histones, chromatin assembly and chromosome segregation. May act as a transcriptional oscillator, directing histone deacetylases to specific chromosomal domains. Component of the NuA4 histone acetyltransferase complex which is involved in transcriptional activation of selected genes principally by acetylation of nucleosomal histone H4 and H2A. The NuA4 complex is also involved in DNA repair. This is Chromatin modification-related protein eaf3 (eaf3) from Emericella nidulans (strain FGSC A4 / ATCC 38163 / CBS 112.46 / NRRL 194 / M139) (Aspergillus nidulans).